The primary structure comprises 516 residues: MASSPITDFYAGRNVFITGATGFVGVTIVEKLLRDVPNVGTLYLLMRAKKGKSVQERLEELKKNSVFDKFKELQLQSRLSKIVPIEGDVGLEHLGISPKDRQTLIDNVNVVFHSAATLDFFQSLKETTNINLRGTRRVVELCQQIKNLDALVHVSSAYVNAYLTKVEEKLYPAPEDPEKIIQLSETLNDDALKELEPKLLKDHPNTYTFTKHLAEHEVANVASKFPCGIVRPSMITAAWKEPIPGWTISKNGPQGFFMGASKGVLRRLPLDPSIIMDYIPIDVVVNGIITTGYYVNSLQAKNGGRPADLQIFHLTSSTYKPFRFELMTDKINSYLHDYPLNSAVWYPNLRLVKSLWVFRLSAILFHFIPAIILDLVTKIGGGRPILVRLHKNVWNSLNTLEKFIFTEWHFDSKRLLALSKTLNIVDKKKFFIDIGELAWDEYFSNTILGVRQYLSKEPIKNLEKARRKDKILLGLHVALQLSFWYGVFKLIVCLTGISTAKAALVLPVLYYLFGLL.

Helical transmembrane passes span 356-376, 471-491, and 496-516; these read WVFRLSAILFHFIPAIILDLV, ILLGLHVALQLSFWYGVFKLI, and GISTAKAALVLPVLYYLFGLL.

Belongs to the fatty acyl-CoA reductase family.

The protein localises to the membrane. It carries out the reaction a long-chain fatty acyl-CoA + 2 NADPH + 2 H(+) = a long-chain primary fatty alcohol + 2 NADP(+) + CoA. Catalyzes the reduction of C16 or C18 fatty acyl-CoA to fatty alcohols. This chain is Putative fatty acyl-CoA reductase CG8306, found in Drosophila melanogaster (Fruit fly).